The following is a 176-amino-acid chain: ATP-dependent protease subunit HslV (176 aa).

Thr2 is an active-site residue. Na(+) contacts are provided by Gly157, Cys160, and Thr163.

The protein belongs to the peptidase T1B family. HslV subfamily. A double ring-shaped homohexamer of HslV is capped on each side by a ring-shaped HslU homohexamer. The assembly of the HslU/HslV complex is dependent on binding of ATP.

The protein localises to the cytoplasm. The enzyme catalyses ATP-dependent cleavage of peptide bonds with broad specificity.. With respect to regulation, allosterically activated by HslU binding. Functionally, protease subunit of a proteasome-like degradation complex believed to be a general protein degrading machinery. In Pseudomonas fluorescens (strain ATCC BAA-477 / NRRL B-23932 / Pf-5), this protein is ATP-dependent protease subunit HslV.